A 422-amino-acid chain; its full sequence is MAKFIDEIKLTLIAGKGGDGIISFRREAHVDKGGPDGGDGGKGGNIYFVGDKGKNTLLSLYGNKQISAEDGINGGPKNLYGATGKSTYVKVPIGTMVFKNDKLVADIIEEKEYLVAQGGIGGRGNAKFKSNRNTAPRICENGTPGEKYLAHIVLKVMSDVGIIGKPSAGKSTLLSAISNAKAKIAEYEFTTLVPQLGLVKYHDHSFTVADLPGLIKGASEGKGLGIQFLRHIERCRVVVQIIDFGSEEKNPIEDFEIINKELEEYSKKLASKPKVVVANKSDLQGFKERVNIFKAKYPDVEIVEISAIERQNLEELKGKIWKILEEAKLLPADEEEETEENVEIKLEDDYKISNPYAGFFEITGPKIEQIYHKIPLVSYDNLIRFNTMLKKIGVWDDLLKYDIKPGDTVRILDYEFEWDGEF.

In terms of domain architecture, Obg spans 2–157 (AKFIDEIKLT…YLAHIVLKVM (156 aa)). The 168-residue stretch at 158-325 (SDVGIIGKPS…LKGKIWKILE (168 aa)) folds into the OBG-type G domain. GTP-binding positions include 164 to 171 (GKPSAGKS), 189 to 193 (FTTLV), 210 to 213 (DLPG), 279 to 282 (NKSD), and 306 to 308 (SAI). Positions 171 and 191 each coordinate Mg(2+). One can recognise an OCT domain in the interval 334 to 420 (EEEETEENVE…ILDYEFEWDG (87 aa)).

The protein belongs to the TRAFAC class OBG-HflX-like GTPase superfamily. OBG GTPase family. As to quaternary structure, monomer. Mg(2+) is required as a cofactor.

The protein localises to the cytoplasm. In terms of biological role, an essential GTPase which binds GTP, GDP and possibly (p)ppGpp with moderate affinity, with high nucleotide exchange rates and a fairly low GTP hydrolysis rate. Plays a role in control of the cell cycle, stress response, ribosome biogenesis and in those bacteria that undergo differentiation, in morphogenesis control. The protein is GTPase Obg of Mycoplasmopsis agalactiae (strain NCTC 10123 / CIP 59.7 / PG2) (Mycoplasma agalactiae).